A 351-amino-acid polypeptide reads, in one-letter code: Porphobilinogen deaminase (351 aa).

Cys-242 carries the S-(dipyrrolylmethanemethyl)cysteine modification.

It belongs to the HMBS family. As to quaternary structure, monomer. Dipyrromethane is required as a cofactor.

The catalysed reaction is 4 porphobilinogen + H2O = hydroxymethylbilane + 4 NH4(+). The protein operates within porphyrin-containing compound metabolism; protoporphyrin-IX biosynthesis; coproporphyrinogen-III from 5-aminolevulinate: step 2/4. In terms of biological role, tetrapolymerization of the monopyrrole PBG into the hydroxymethylbilane pre-uroporphyrinogen in several discrete steps. In Rickettsia peacockii (strain Rustic), this protein is Porphobilinogen deaminase.